Consider the following 963-residue polypeptide: Spliceosome associated factor 3, U4/U6 recycling protein (963 aa).

Residues 1–11 (MATAAETSASE) show a composition bias toward low complexity. 2 disordered regions span residues 1–36 (MATA…RTRR) and 50–90 (TMGP…YDEE). An N-acetylalanine modification is found at Ala-2. Residues 2–351 (ATAAETSASE…LVPDLWIRYS (350 aa)) are mediates interaction with PRPF3. Phosphoserine is present on residues Ser-10 and Ser-16. Residues 14–23 (AESKAGPKAD) are compositionally biased toward basic and acidic residues. The stretch at 21–46 (KADGEEDEVKAARTRRKVLSRAVAAA) forms a coiled coil. Positions 57-69 (QQEEGVSESDGDE) are enriched in acidic residues. Residues 82–110 (EYEWEYDEEEEKNQLEIERLEEQLSINVY) are a coiled coil. 8 HAT repeats span residues 126–158 (GELT…DEIS), 164–195 (LDRE…YSVG), 201–237 (GGLE…FESA), 242–275 (ARLE…WSED), 324–356 (GDPA…YLDR), 359–391 (KVKD…AMER), 394–430 (VDHQ…YLRR), and 487–520 (NNMQ…LERA). Phosphoserine is present on Ser-215. Residues 487-520 (NNMQKARELWDSIMTRGNAKYANMWLEYYNLERA) form a required for interaction with USP4 region. Residues 537–953 (CTSDYPEHVC…AATEAPKMSN (417 aa)) are necessary and sufficient for U6 snRNA binding. Positions 559–619 (LEDWDIAVQK…ALKKKKKIRG (61 aa)) form a coiled coil. The segment covering 590–601 (LVQQEEEKAEQR) has biased composition (basic and acidic residues). Residues 590–694 (LVQQEEEKAE…AASLKRDMPK (105 aa)) are disordered. The interval 600–670 (QRKRARAEKK…EVAAGPAGKC (71 aa)) is required for nuclear localization. Residues 601–608 (RKRARAEK) carry the Nuclear localization signal motif. Basic residues predominate over residues 602–617 (KRARAEKKALKKKKKI). The span at 626–639 (DEDDEKEWGDDEEE) shows a compositional bias: acidic residues. Ser-650 is subject to Phosphoserine. Phosphothreonine is present on Thr-657. Positions 677-694 (PPSKQKEKAASLKRDMPK) are enriched in basic and acidic residues. In terms of domain architecture, RRM 1 spans 704–782 (ITVFVSNLPY…RPMFVSPCVD (79 aa)). A phosphoserine mark is found at Ser-769, Ser-795, and Ser-852. The RRM 2 domain occupies 801 to 878 (HKLFISGLPF…NIIKVAISNP (78 aa)). The segment at 878-898 (PPQRKVPEKPETRKAPGGPML) is disordered. The span at 882–891 (KVPEKPETRK) shows a compositional bias: basic and acidic residues. Position 906 is an omega-N-methylarginine (Arg-906). Residues 920–948 (LQRPSAAAPQAENGPAAAPAVAAPAATEA) form a disordered region. Residues 925–948 (AAAPQAENGPAAAPAVAAPAATEA) show a composition bias toward low complexity.

In terms of assembly, component of the 7SK snRNP complex at least composed of P-TEFb (composed of CDK9 and CCNT1/cyclin-T1), HEXIM1, HEXIM2, BCDIN3, SART3 proteins and 7SK and U6 snRNAs. Interacts with AGO1 and AGO2. Interacts with PRPF3 and USP4; the interaction with PRPF3 is direct and recruits USP4 to its substrate PRPF3. Interacts with USP15; the interaction is direct. Interacts with HIV-1 Tat. Ubiquitously expressed.

It localises to the nucleus. Its subcellular location is the nucleoplasm. The protein localises to the cajal body. The protein resides in the nucleus speckle. It is found in the cytoplasm. In terms of biological role, U6 snRNP-binding protein that functions as a recycling factor of the splicing machinery. Promotes the initial reassembly of U4 and U6 snRNPs following their ejection from the spliceosome during its maturation. Also binds U6atac snRNPs and may function as a recycling factor for U4atac/U6atac spliceosomal snRNP, an initial step in the assembly of U12-type spliceosomal complex. The U12-type spliceosomal complex plays a role in the splicing of introns with non-canonical splice sites. May also function as a substrate-targeting factor for deubiquitinases like USP4 and USP15. Recruits USP4 to ubiquitinated PRPF3 within the U4/U5/U6 tri-snRNP complex, promoting PRPF3 deubiquitination and thereby regulating the spliceosome U4/U5/U6 tri-snRNP spliceosomal complex disassembly. May also recruit the deubiquitinase USP15 to histone H2B and mediate histone deubiquitination, thereby regulating gene expression and/or DNA repair. May play a role in hematopoiesis probably through transcription regulation of specific genes including MYC. Its function is as follows. Regulates Tat transactivation activity through direct interaction. May be a cellular factor for HIV-1 gene expression and viral replication. The polypeptide is Spliceosome associated factor 3, U4/U6 recycling protein (Homo sapiens (Human)).